A 171-amino-acid chain; its full sequence is 3-hydroxydecanoyl-[acyl-carrier-protein] dehydratase (171 aa).

Residue His70 is part of the active site.

Belongs to the thioester dehydratase family. FabA subfamily. Homodimer.

It localises to the cytoplasm. The enzyme catalyses a (3R)-hydroxyacyl-[ACP] = a (2E)-enoyl-[ACP] + H2O. The catalysed reaction is (3R)-hydroxydecanoyl-[ACP] = (2E)-decenoyl-[ACP] + H2O. It catalyses the reaction (2E)-decenoyl-[ACP] = (3Z)-decenoyl-[ACP]. It participates in lipid metabolism; fatty acid biosynthesis. In terms of biological role, necessary for the introduction of cis unsaturation into fatty acids. Catalyzes the dehydration of (3R)-3-hydroxydecanoyl-ACP to E-(2)-decenoyl-ACP and then its isomerization to Z-(3)-decenoyl-ACP. Can catalyze the dehydratase reaction for beta-hydroxyacyl-ACPs with saturated chain lengths up to 16:0, being most active on intermediate chain length. The chain is 3-hydroxydecanoyl-[acyl-carrier-protein] dehydratase from Pseudomonas putida (strain ATCC 700007 / DSM 6899 / JCM 31910 / BCRC 17059 / LMG 24140 / F1).